A 141-amino-acid polypeptide reads, in one-letter code: MSDEAYAAFLETANKPVPSYSGDSSQLPSKWLRSSKNMLEDPSFKTLAGKVKDEYFVSESDEKFHPICIDNIPDEFEEIDAKTFDPHQKYKKVIHAIEQSSGSKDIHYFSYEESSTKTVYYVLAHLNDNKWFGVATVGIYT.

This is an uncharacterized protein from Schizosaccharomyces pombe (strain 972 / ATCC 24843) (Fission yeast).